The primary structure comprises 485 residues: Glutamyl-tRNA(Gln) amidotransferase subunit A (485 aa).

Residues Lys80 and Ser155 each act as charge relay system in the active site. Ser179 functions as the Acyl-ester intermediate in the catalytic mechanism.

Belongs to the amidase family. GatA subfamily. In terms of assembly, heterotrimer of A, B and C subunits.

It catalyses the reaction L-glutamyl-tRNA(Gln) + L-glutamine + ATP + H2O = L-glutaminyl-tRNA(Gln) + L-glutamate + ADP + phosphate + H(+). Functionally, allows the formation of correctly charged Gln-tRNA(Gln) through the transamidation of misacylated Glu-tRNA(Gln) in organisms which lack glutaminyl-tRNA synthetase. The reaction takes place in the presence of glutamine and ATP through an activated gamma-phospho-Glu-tRNA(Gln). The protein is Glutamyl-tRNA(Gln) amidotransferase subunit A of Leptospira borgpetersenii serovar Hardjo-bovis (strain L550).